A 317-amino-acid chain; its full sequence is Beta-ketoacyl-[acyl-carrier-protein] synthase III (317 aa).

Active-site residues include Cys112 and His244. The tract at residues 245–249 is ACP-binding; it reads QANLR. Residue Asn274 is part of the active site.

The protein belongs to the thiolase-like superfamily. FabH family. As to quaternary structure, homodimer.

It is found in the cytoplasm. It carries out the reaction malonyl-[ACP] + acetyl-CoA + H(+) = 3-oxobutanoyl-[ACP] + CO2 + CoA. The protein operates within lipid metabolism; fatty acid biosynthesis. In terms of biological role, catalyzes the condensation reaction of fatty acid synthesis by the addition to an acyl acceptor of two carbons from malonyl-ACP. Catalyzes the first condensation reaction which initiates fatty acid synthesis and may therefore play a role in governing the total rate of fatty acid production. Possesses both acetoacetyl-ACP synthase and acetyl transacylase activities. Its substrate specificity determines the biosynthesis of branched-chain and/or straight-chain of fatty acids. This is Beta-ketoacyl-[acyl-carrier-protein] synthase III from Salmonella typhimurium (strain LT2 / SGSC1412 / ATCC 700720).